The primary structure comprises 207 residues: Outer-membrane lipoprotein LolB (207 aa).

An N-terminal signal peptide occupies residues 1-21 (MPLPDFRLIRLLPLAALVLTA). Cys-22 carries the N-palmitoyl cysteine lipid modification. Residue Cys-22 is the site of S-diacylglycerol cysteine attachment.

It belongs to the LolB family. Monomer.

Its subcellular location is the cell outer membrane. Its function is as follows. Plays a critical role in the incorporation of lipoproteins in the outer membrane after they are released by the LolA protein. The sequence is that of Outer-membrane lipoprotein LolB from Escherichia coli O127:H6 (strain E2348/69 / EPEC).